An 822-amino-acid chain; its full sequence is A disintegrin and metallopeptidase domain 3 (822 aa).

Positions 1 to 16 (MLPLFLVLSYLGQVIA) are cleaved as a signal peptide. A Peptidase M12B domain is found at 187-384 (RILRIKIIMD…PELDCLRNTS (198 aa)). 7 cysteine pairs are disulfide-bonded: C296-C379, C338-C363, C340-C345, C456-C476, C623-C635, C629-C641, and C643-C652. In terms of domain architecture, Disintegrin spans 395–484 (GSYCGNHLLE…GCAPDTKAAD (90 aa)). One can recognise an EGF-like domain in the interval 619–653 (GTRECEADDKCQGHGICNNLNNCQCESGFAPPECD). A helical membrane pass occupies residues 689–709 (VLLISFYILLPFLVVLAFMAV).

As to quaternary structure, interacts with LY6K. Interacts with TEX101. Post-translationally, initially synthesized as a 110-kDa precursor in round spermatids, and the precursor is then processed into a 42-kDa mature protein during the sperm transport into and/or once in the epididymis. In terms of tissue distribution, expressed in sperm (at protein level).

It localises to the cell membrane. Its function is as follows. Involved in fertilization by controlling sperm migration into the oviduct. Promotes the binding of sperm to the oocyte zona pellucida. This Mus musculus (Mouse) protein is A disintegrin and metallopeptidase domain 3.